A 105-amino-acid polypeptide reads, in one-letter code: Thiosulfate sulfurtransferase GlpE (105 aa).

Positions 16–104 (DKEDVVIADI…WEAAYSEKVE (89 aa)) constitute a Rhodanese domain. Cys-64 (cysteine persulfide intermediate) is an active-site residue.

Belongs to the GlpE family.

Its subcellular location is the cytoplasm. It carries out the reaction thiosulfate + hydrogen cyanide = thiocyanate + sulfite + 2 H(+). The catalysed reaction is thiosulfate + [thioredoxin]-dithiol = [thioredoxin]-disulfide + hydrogen sulfide + sulfite + 2 H(+). Its function is as follows. Transferase that catalyzes the transfer of sulfur from thiosulfate to thiophilic acceptors such as cyanide or dithiols. May function in a CysM-independent thiosulfate assimilation pathway by catalyzing the conversion of thiosulfate to sulfite, which can then be used for L-cysteine biosynthesis. This Pseudoalteromonas translucida (strain TAC 125) protein is Thiosulfate sulfurtransferase GlpE.